A 145-amino-acid polypeptide reads, in one-letter code: Neutral phospholipase A2 paradoxin-like beta chain (145 aa).

A signal peptide spans 1-27; it reads MHPAHLLVLLAVCVSLLGASDIPPLPL. Disulfide bonds link Cys38–Cys98, Cys54–Cys144, Cys56–Cys72, Cys71–Cys125, Cys78–Cys118, Cys87–Cys111, and Cys105–Cys116.

Belongs to the phospholipase A2 family. Group I subfamily. N49 sub-subfamily. As to quaternary structure, heterotrimer of alpha, beta, and gamma chains; non-covalently linked. Expressed by the venom gland.

The protein resides in the secreted. Heterotrimer: Snake venom phospholipase A2 (PLA2) heterotrimer that acts as a potent presynaptic neurotoxin by blocking synaptic transmission and synaptic vesicle recycling. May act by binding in a calcium-dependent fashion to neurotonal pentraxin-1 (NPTX1) and neurotonal pentraxin-2 (NPTX2), but not to neuronal pentraxin receptor (NPTXR). Also binds to taipoxin-associated calcium binding protein 49 (RCN2), a protein localized in the lumen of endoplasmic reticulum. In terms of biological role, monomer (beta chain): Snake venom phospholipase A2 homolog that is neither toxic nor enzymatically active. Does not bind calcium. The polypeptide is Neutral phospholipase A2 paradoxin-like beta chain (Oxyuranus microlepidotus (Inland taipan)).